The primary structure comprises 417 residues: Serine hydroxymethyltransferase (417 aa).

Residues Leu121 and 125–127 each bind (6S)-5,6,7,8-tetrahydrofolate; that span reads GHL. At Lys229 the chain carries N6-(pyridoxal phosphate)lysine. (6S)-5,6,7,8-tetrahydrofolate is bound at residue 355 to 357; sequence SPF.

Belongs to the SHMT family. In terms of assembly, homodimer. The cofactor is pyridoxal 5'-phosphate.

It is found in the cytoplasm. The catalysed reaction is (6R)-5,10-methylene-5,6,7,8-tetrahydrofolate + glycine + H2O = (6S)-5,6,7,8-tetrahydrofolate + L-serine. The protein operates within one-carbon metabolism; tetrahydrofolate interconversion. It functions in the pathway amino-acid biosynthesis; glycine biosynthesis; glycine from L-serine: step 1/1. In terms of biological role, catalyzes the reversible interconversion of serine and glycine with tetrahydrofolate (THF) serving as the one-carbon carrier. This reaction serves as the major source of one-carbon groups required for the biosynthesis of purines, thymidylate, methionine, and other important biomolecules. Also exhibits THF-independent aldolase activity toward beta-hydroxyamino acids, producing glycine and aldehydes, via a retro-aldol mechanism. The sequence is that of Serine hydroxymethyltransferase from Salmonella arizonae (strain ATCC BAA-731 / CDC346-86 / RSK2980).